The chain runs to 411 residues: 1-deoxy-D-xylulose 5-phosphate reductoisomerase (411 aa).

NADPH is bound by residues threonine 11, glycine 12, serine 13, isoleucine 14, and asparagine 124. Lysine 125 is a 1-deoxy-D-xylulose 5-phosphate binding site. Glutamate 126 contributes to the NADPH binding site. Aspartate 150 provides a ligand contact to Mn(2+). Serine 151, glutamate 152, serine 186, and histidine 209 together coordinate 1-deoxy-D-xylulose 5-phosphate. Mn(2+) is bound at residue glutamate 152. Glycine 215 contacts NADPH. The 1-deoxy-D-xylulose 5-phosphate site is built by serine 222, asparagine 227, lysine 228, and glutamate 231. Glutamate 231 contributes to the Mn(2+) binding site.

The protein belongs to the DXR family. Mg(2+) serves as cofactor. Requires Mn(2+) as cofactor.

It carries out the reaction 2-C-methyl-D-erythritol 4-phosphate + NADP(+) = 1-deoxy-D-xylulose 5-phosphate + NADPH + H(+). It functions in the pathway isoprenoid biosynthesis; isopentenyl diphosphate biosynthesis via DXP pathway; isopentenyl diphosphate from 1-deoxy-D-xylulose 5-phosphate: step 1/6. In terms of biological role, catalyzes the NADPH-dependent rearrangement and reduction of 1-deoxy-D-xylulose-5-phosphate (DXP) to 2-C-methyl-D-erythritol 4-phosphate (MEP). The polypeptide is 1-deoxy-D-xylulose 5-phosphate reductoisomerase (Psychrobacter sp. (strain PRwf-1)).